The following is an 85-amino-acid chain: ATP synthase subunit c (85 aa).

The next 2 membrane-spanning stretches (helical) occupy residues 10–30 (IAVALLIGLGALGTAIGFGLL) and 53–73 (FIVAGLLDAVTMIGVGIALFF).

The protein belongs to the ATPase C chain family. F-type ATPases have 2 components, F(1) - the catalytic core - and F(0) - the membrane proton channel. F(1) has five subunits: alpha(3), beta(3), gamma(1), delta(1), epsilon(1). F(0) has three main subunits: a(1), b(2) and c(10-14). The alpha and beta chains form an alternating ring which encloses part of the gamma chain. F(1) is attached to F(0) by a central stalk formed by the gamma and epsilon chains, while a peripheral stalk is formed by the delta and b chains.

It localises to the cell inner membrane. In terms of biological role, f(1)F(0) ATP synthase produces ATP from ADP in the presence of a proton or sodium gradient. F-type ATPases consist of two structural domains, F(1) containing the extramembraneous catalytic core and F(0) containing the membrane proton channel, linked together by a central stalk and a peripheral stalk. During catalysis, ATP synthesis in the catalytic domain of F(1) is coupled via a rotary mechanism of the central stalk subunits to proton translocation. Its function is as follows. Key component of the F(0) channel; it plays a direct role in translocation across the membrane. A homomeric c-ring of between 10-14 subunits forms the central stalk rotor element with the F(1) delta and epsilon subunits. The polypeptide is ATP synthase subunit c (Pseudomonas aeruginosa (strain LESB58)).